The primary structure comprises 401 residues: MFDKQEFVSKLVTEEKAKIVLLVMDGLGDIPVNGKTPLQAANTPNLDSLAKESDLGQTIPVLPGITPGSGPGHLSLFGYDPIRYQIGRGILEALGIGVEVGEKDVVARANFATWDGKVVLDRRAGRPATEESAKVVQLLSEKIKKIEDVEITFYPGKEHRFVVKFTGEGLGDNVTDADPQKEGHPMVWAEGLDEPSKKTARITNELIKKIAEVLKDNPKINFALIRGFSKYPDLPKFPQVYKMKAGAIATYPMYRGLAKLVGMEIIETGQTVADEIKTLKERWNDYDFFYVHVKKTDSYGEDGKFEEKVKVIEEVDALIPEIVSLNPDVLVITGDHSTPVPLKAHSWHPVPLLIWSKYTRRGLSQAFNEFECARGTLGTIHASDVMTLALAYAGKLEKFGA.

Belongs to the BPG-independent phosphoglycerate mutase family. A-PGAM subfamily.

The enzyme catalyses (2R)-2-phosphoglycerate = (2R)-3-phosphoglycerate. It participates in carbohydrate degradation; glycolysis; pyruvate from D-glyceraldehyde 3-phosphate: step 3/5. In terms of biological role, catalyzes the interconversion of 2-phosphoglycerate and 3-phosphoglycerate. The chain is Probable 2,3-bisphosphoglycerate-independent phosphoglycerate mutase from Thermotoga petrophila (strain ATCC BAA-488 / DSM 13995 / JCM 10881 / RKU-1).